A 390-amino-acid polypeptide reads, in one-letter code: Succinate--CoA ligase [ADP-forming] subunit beta (390 aa).

An ATP-grasp domain is found at 9–245 (KHLLKKYNIP…TTQEDEHETM (237 aa)). Residues Lys-46, 53–55 (GRG), Glu-99, Ser-102, and Glu-107 each bind ATP. 2 residues coordinate Mg(2+): Asn-200 and Asp-214. Residues Asn-265 and 322–324 (GIV) each bind substrate.

It belongs to the succinate/malate CoA ligase beta subunit family. As to quaternary structure, heterotetramer of two alpha and two beta subunits. Mg(2+) serves as cofactor.

It catalyses the reaction succinate + ATP + CoA = succinyl-CoA + ADP + phosphate. The enzyme catalyses GTP + succinate + CoA = succinyl-CoA + GDP + phosphate. It participates in carbohydrate metabolism; tricarboxylic acid cycle; succinate from succinyl-CoA (ligase route): step 1/1. Functionally, succinyl-CoA synthetase functions in the citric acid cycle (TCA), coupling the hydrolysis of succinyl-CoA to the synthesis of either ATP or GTP and thus represents the only step of substrate-level phosphorylation in the TCA. The beta subunit provides nucleotide specificity of the enzyme and binds the substrate succinate, while the binding sites for coenzyme A and phosphate are found in the alpha subunit. This chain is Succinate--CoA ligase [ADP-forming] subunit beta, found in Coxiella burnetii (strain RSA 493 / Nine Mile phase I).